The following is a 340-amino-acid chain: Coproporphyrin III ferrochelatase (340 aa).

The Fe-coproporphyrin III site is built by S52 and Y121. Residues H177 and E260 each coordinate Fe(2+).

Belongs to the ferrochelatase family.

The protein localises to the cytoplasm. It carries out the reaction Fe-coproporphyrin III + 2 H(+) = coproporphyrin III + Fe(2+). It participates in porphyrin-containing compound metabolism; protoheme biosynthesis. Functionally, involved in coproporphyrin-dependent heme b biosynthesis. Catalyzes the insertion of ferrous iron into coproporphyrin III to form Fe-coproporphyrin III. The polypeptide is Coproporphyrin III ferrochelatase (Mycobacteroides abscessus (strain ATCC 19977 / DSM 44196 / CCUG 20993 / CIP 104536 / JCM 13569 / NCTC 13031 / TMC 1543 / L948) (Mycobacterium abscessus)).